A 182-amino-acid chain; its full sequence is uncharacterized protein (182 aa).

The first 26 residues, 1–26 (MIRALCTIVLIAAGVAVALYLSLVYG), serve as a signal peptide directing secretion. The tract at residues 68-90 (YTERPYPVSSTQSPTTTQSPTTT) is disordered. The segment covering 74–90 (PVSSTQSPTTTQSPTTT) has biased composition (low complexity).

This is an uncharacterized protein from Dryophytes versicolor (chameleon treefrog).